A 75-amino-acid polypeptide reads, in one-letter code: Defensin J1-1 (75 aa).

An N-terminal signal peptide occupies residues 1–27 (MAGFSKVVATIFLMMLLVFATDMMAEA). Intrachain disulfides connect C30-C74, C41-C61, C47-C68, and C51-C70.

The protein belongs to the DEFL family. As to quaternary structure, monomer. As to expression, expressed in orange and red ripe fruit and to a lesser extent in mature, green fruit. Present in trace in young, green fruit.

Its subcellular location is the secreted. Its function is as follows. Plant defense peptide with antifungal activity against F.oxysporum and B.cinerea. The polypeptide is Defensin J1-1 (Capsicum annuum (Capsicum pepper)).